A 373-amino-acid polypeptide reads, in one-letter code: Chaperone protein DnaJ (373 aa).

In terms of domain architecture, J spans 4–68; sequence NYYQILGVSK…QKRAAYDRLG (65 aa). A CR-type zinc finger spans residues 136 to 214; it reads GIEKNINFSS…CHGMGRYHKQ (79 aa). Cysteine 149, cysteine 152, cysteine 166, cysteine 169, cysteine 188, cysteine 191, cysteine 202, and cysteine 205 together coordinate Zn(2+). CXXCXGXG motif repeat units follow at residues 149-156, 166-173, 188-195, and 202-209; these read CNTCHGSG, CDACSGVG, CHKCQGNG, and CKKCHGMG.

It belongs to the DnaJ family. In terms of assembly, homodimer. It depends on Zn(2+) as a cofactor.

It is found in the cytoplasm. Functionally, participates actively in the response to hyperosmotic and heat shock by preventing the aggregation of stress-denatured proteins and by disaggregating proteins, also in an autonomous, DnaK-independent fashion. Unfolded proteins bind initially to DnaJ; upon interaction with the DnaJ-bound protein, DnaK hydrolyzes its bound ATP, resulting in the formation of a stable complex. GrpE releases ADP from DnaK; ATP binding to DnaK triggers the release of the substrate protein, thus completing the reaction cycle. Several rounds of ATP-dependent interactions between DnaJ, DnaK and GrpE are required for fully efficient folding. Also involved, together with DnaK and GrpE, in the DNA replication of plasmids through activation of initiation proteins. The polypeptide is Chaperone protein DnaJ (Rickettsia rickettsii (strain Sheila Smith)).